Reading from the N-terminus, the 400-residue chain is Tryptophan--tRNA ligase (400 aa).

A 'HIGH' region motif is present at residues 12–20; the sequence is PTGALHLGH. Positions 173 to 241 are insert; that stretch reads REPGFEQKAL…RLFGYLEGAR (69 aa). The short motif at 265 to 269 is the 'KMSKS' region element; it reads KMSKS. Position 268 (K268) interacts with ATP. The disordered stretch occupies residues 280-305; sequence KASVEKKVRTMPTDPARVRRTDPGDP. Over residues 295 to 304 the composition is skewed to basic and acidic residues; sequence ARVRRTDPGD.

The protein belongs to the class-I aminoacyl-tRNA synthetase family. In terms of assembly, homodimer.

The protein localises to the cytoplasm. The catalysed reaction is tRNA(Trp) + L-tryptophan + ATP = L-tryptophyl-tRNA(Trp) + AMP + diphosphate + H(+). This Ralstonia nicotianae (strain ATCC BAA-1114 / GMI1000) (Ralstonia solanacearum) protein is Tryptophan--tRNA ligase (trpS).